Here is a 203-residue protein sequence, read N- to C-terminus: E3 ubiquitin-protein ligase RNF152 (203 aa).

Residues 12–55 (CQICFNYYSPRRRPKLLDCKHTCCSVCLQQMRTSQKDVRCPWCR) form an RING-type zinc finger. A necessary for interaction with RRAGA region spans residues 106–165 (ISKERALLPGDMGCRLLPGSQQKSVTVVTIPAEQQPLQGGAPQEAVEEEQDRRGVVKSST). The helical transmembrane segment at 167–187 (SGVCTVILVACVLVFLLGIVL) threads the bilayer.

This sequence belongs to the RNF152 family. Interacts with RRAGA (inactive GDP-bound form); stimulated by amino acid starvation. Interacts with SEC16A. In terms of processing, ubiquitinated. Autoubiquitinated in vitro, leading to its degradation by the proteasome. As to expression, widely expressed.

The protein localises to the lysosome membrane. The enzyme catalyses S-ubiquitinyl-[E2 ubiquitin-conjugating enzyme]-L-cysteine + [acceptor protein]-L-lysine = [E2 ubiquitin-conjugating enzyme]-L-cysteine + N(6)-ubiquitinyl-[acceptor protein]-L-lysine.. The protein operates within protein modification; protein ubiquitination. Its function is as follows. E3 ubiquitin-protein ligase that acts as a negative regulator of mTORC1 signaling by mediating ubiquitination of RagA/RRAGA and RHEB. Catalyzes 'Lys-63'-linked polyubiquitination of RagA/RRAGA in response to amino acid starvation, thereby regulating mTORC1 signaling. Also mediates monoubiquitination of RHEB, promoting its association with the TSC-TBC complex and subsequent inhibition. Also mediates 'Lys-48'-linked polyubiquitination of target proteins and their subsequent targeting to the proteasome for degradation. Induces apoptosis when overexpressed. This Homo sapiens (Human) protein is E3 ubiquitin-protein ligase RNF152.